A 495-amino-acid chain; its full sequence is F(420)H(2) dehydrogenase subunit M (495 aa).

A run of 15 helical transmembrane segments spans residues 1-21, 27-47, 57-77, 80-100, 108-128, 130-150, 163-183, 215-235, 249-269, 277-297, 315-335, 338-358, 378-398, 412-432, and 450-470; these read MLPV…VTFF, LAAG…LYAY, MQFY…SVGI, VSMP…LFTW, NRFY…FVAL, FVVF…IVNL, FFIY…GLFY, IFLA…FHSW, ILFI…LPML, LMIM…ALLA, MGYV…GAMF, FSHG…QTAA, VAMM…GFIA, VFVV…LWAM, and INSI…YFGL.

It belongs to the complex I subunit 4 family. In terms of assembly, the FPO complex is composed of at least 13 different subunits. FpoA, FpoH, FpoJ, FpoK, FpoL, FpoM and FpoN proteins constitute the membrane sector of the complex.

It localises to the cell membrane. It catalyses the reaction methanophenazine + reduced coenzyme F420-(gamma-L-Glu)(n) = dihydromethanophenazine + oxidized coenzyme F420-(gamma-L-Glu)(n) + H(+). Functionally, component of the F(420)H(2) dehydrogenase (FPO complex) which is part of the energy-conserving F(420)H(2):heterodisulfide oxidoreductase system. The membrane-bound electron transfer system of the complex plays an important role in the metabolism of methylotrophic methanogens when the organisms grow on methanol or methylamines. Catalyzes the oxidation of methanophenazine to dihydromethanophenazine. It shuttles electrons from F(420)H(2), via FAD and iron-sulfur (Fe-S) centers, to methanophenazine (an electron carrier in the membrane). It couples the redox reaction to proton translocation (for every two electrons transferred, two hydrogen ions are translocated across the cytoplasmic membrane), and thus conserves the redox energy in a proton gradient. It also catalyzes the oxidation of F(420)H(2) with quinones such as 2,3-dimethyl-1,4-naphthoquinone, 2-methyl-1,4-naphthoquinone and tetramethyl-p-benzoquinone. This Methanosarcina mazei (strain ATCC BAA-159 / DSM 3647 / Goe1 / Go1 / JCM 11833 / OCM 88) (Methanosarcina frisia) protein is F(420)H(2) dehydrogenase subunit M (fpoM).